We begin with the raw amino-acid sequence, 251 residues long: tRNA (guanine-N(1)-)-methyltransferase (251 aa).

S-adenosyl-L-methionine-binding positions include glycine 111 and 131-136 (LGDFVL).

The protein belongs to the RNA methyltransferase TrmD family. In terms of assembly, homodimer.

It localises to the cytoplasm. It carries out the reaction guanosine(37) in tRNA + S-adenosyl-L-methionine = N(1)-methylguanosine(37) in tRNA + S-adenosyl-L-homocysteine + H(+). Its function is as follows. Specifically methylates guanosine-37 in various tRNAs. The chain is tRNA (guanine-N(1)-)-methyltransferase from Synechococcus sp. (strain JA-2-3B'a(2-13)) (Cyanobacteria bacterium Yellowstone B-Prime).